We begin with the raw amino-acid sequence, 98 residues long: MNAMLVLFIASALFISEHNTEEVKTTPIPNHQCVNATCERKLDALGNAVITKCPQGCLCVVRGASNIVPANGTCFQLATTKPPMAPGDNKDNKEEESN.

A signal peptide spans 1-20 (MNAMLVLFIASALFISEHNT). Cystine bridges form between C33-C57, C38-C59, and C53-C74. The tract at residues 79 to 98 (TTKPPMAPGDNKDNKEEESN) is disordered. Over residues 88-98 (DNKDNKEEESN) the composition is skewed to basic and acidic residues.

This sequence belongs to the RaCI family. In terms of tissue distribution, expressed in salivary glands.

The protein resides in the secreted. Its function is as follows. Complement inhibitor. Prevents complement-mediated C5 activation by binding to C5. Binds C5 at a different binding site than the other tick complement inhibitors OmCI and CirpT1, and the drug eculizumab. Inhibits the complement in human and guinea pig but not in other species tested (rabbit, rat, mouse, and pig). This is Complement inhibitor RaCI1 from Rhipicephalus appendiculatus (Brown ear tick).